A 182-amino-acid chain; its full sequence is Epoxyqueuosine reductase QueH (182 aa).

[4Fe-4S] cluster contacts are provided by C10, C11, C85, and C88. C165 and C167 form a disulfide bridge.

It belongs to the QueH family.

It catalyses the reaction epoxyqueuosine(34) in tRNA + AH2 = queuosine(34) in tRNA + A + H2O. The protein operates within tRNA modification; tRNA-queuosine biosynthesis. Functionally, catalyzes the conversion of epoxyqueuosine (oQ) to queuosine (Q), which is a hypermodified base found in the wobble positions of tRNA(Asp), tRNA(Asn), tRNA(His) and tRNA(Tyr). The protein is Epoxyqueuosine reductase QueH of Dehalococcoides mccartyi (strain ATCC BAA-2266 / KCTC 15142 / 195) (Dehalococcoides ethenogenes (strain 195)).